Here is a 456-residue protein sequence, read N- to C-terminus: Methylenetetrahydrofolate--tRNA-(uracil-5-)-methyltransferase TrmFO (456 aa).

7–12 (GAGLAG) is an FAD binding site.

The protein belongs to the MnmG family. TrmFO subfamily. FAD is required as a cofactor.

The protein resides in the cytoplasm. It catalyses the reaction uridine(54) in tRNA + (6R)-5,10-methylene-5,6,7,8-tetrahydrofolate + NADH + H(+) = 5-methyluridine(54) in tRNA + (6S)-5,6,7,8-tetrahydrofolate + NAD(+). It carries out the reaction uridine(54) in tRNA + (6R)-5,10-methylene-5,6,7,8-tetrahydrofolate + NADPH + H(+) = 5-methyluridine(54) in tRNA + (6S)-5,6,7,8-tetrahydrofolate + NADP(+). Its function is as follows. Catalyzes the folate-dependent formation of 5-methyl-uridine at position 54 (M-5-U54) in all tRNAs. The chain is Methylenetetrahydrofolate--tRNA-(uracil-5-)-methyltransferase TrmFO from Synechococcus sp. (strain RCC307).